The primary structure comprises 320 residues: MMQSKPGVLMVNLGTPDAPTSKAIKRYLAEFLSDRRVVDTSPLLWWPLLHGVILPLRSPRVAKLYQSVWMEEGSPLLVYSRRQQKALAARMPDIPVELGMSYGSPNLPEAIEKLLAQGVTNLVILPLYPQYSCSTSAAVWDAVARVLKGYRRLPSISFIRDYAEHPAYISALKQSVERSFAEHGQPDRLVMSFHGIPKRYAQLGDDYPIRCEDTSRALRAALPLPAEKIIMTYQSRFGREPWLTPYTDETLKSLPSQGVKHIQLICPGFSADCLETLEEIKEQNREFFLHAGGEKFEYIPALNDDEGHIALLEQLIRHNI.

Positions 194 and 275 each coordinate Fe cation.

The protein belongs to the ferrochelatase family.

The protein resides in the cytoplasm. The catalysed reaction is heme b + 2 H(+) = protoporphyrin IX + Fe(2+). It functions in the pathway porphyrin-containing compound metabolism; protoheme biosynthesis; protoheme from protoporphyrin-IX: step 1/1. Functionally, catalyzes the ferrous insertion into protoporphyrin IX. The polypeptide is Ferrochelatase (Yersinia pestis bv. Antiqua (strain Antiqua)).